The chain runs to 229 residues: MGQKVHPNGIRLGITKPWISTWYADKSDYANNLSSDWEVRKFLEKKLKQASVSKIVIERPAKSVRVTIHTARPGVVIGKKGEDVEKLRNEVAKLTGIPAQINIAEIRKPELDAKLVAEGIASQLERRVMFRRAMKRAVQNAMRLGAKGIKVEVSGRLGGAEIARSEWYREGRVPLHTLRADIDYSTAESHTQYGVIGVKVWVFKGEVLDGVVPALEEPKQQPKRKPRGK.

The 69-residue stretch at 39–107 (VRKFLEKKLK…PAQINIAEIR (69 aa)) folds into the KH type-2 domain.

Belongs to the universal ribosomal protein uS3 family. In terms of assembly, part of the 30S ribosomal subunit. Forms a tight complex with proteins S10 and S14.

Functionally, binds the lower part of the 30S subunit head. Binds mRNA in the 70S ribosome, positioning it for translation. This is Small ribosomal subunit protein uS3 from Shewanella loihica (strain ATCC BAA-1088 / PV-4).